The chain runs to 556 residues: ATP synthase subunit beta-1, mitochondrial (556 aa).

Over residues 1–20 (MASRRVLSSLLRSSSGRSAA) the composition is skewed to low complexity. The disordered stretch occupies residues 1–37 (MASRRVLSSLLRSSSGRSAAKLGNRNPRLPSPSPARH). The N-terminal 51 residues, 1 to 51 (MASRRVLSSLLRSSSGRSAAKLGNRNPRLPSPSPARHAAPCSYLLGRVAEY), are a transit peptide targeting the mitochondrion. S59 carries the post-translational modification Phosphoserine. ATP is bound at residue 231 to 238 (GGAGVGKT).

This sequence belongs to the ATPase alpha/beta chains family. As to quaternary structure, F-type ATPases have 2 components, CF(1) - the catalytic core - and CF(0) - the membrane proton channel. CF(1) has five subunits: alpha(3), beta(3), gamma(1), delta(1), epsilon(1). CF(0) has three main subunits: a, b and c.

The protein resides in the mitochondrion. The protein localises to the mitochondrion inner membrane. It carries out the reaction ATP + H2O + 4 H(+)(in) = ADP + phosphate + 5 H(+)(out). Functionally, mitochondrial membrane ATP synthase (F(1)F(0) ATP synthase or Complex V) produces ATP from ADP in the presence of a proton gradient across the membrane which is generated by electron transport complexes of the respiratory chain. F-type ATPases consist of two structural domains, F(1) - containing the extramembraneous catalytic core, and F(0) - containing the membrane proton channel, linked together by a central stalk and a peripheral stalk. During catalysis, ATP synthesis in the catalytic domain of F(1) is coupled via a rotary mechanism of the central stalk subunits to proton translocation. Subunits alpha and beta form the catalytic core in F(1). Rotation of the central stalk against the surrounding alpha(3)beta(3) subunits leads to hydrolysis of ATP in three separate catalytic sites on the beta subunits. The sequence is that of ATP synthase subunit beta-1, mitochondrial from Arabidopsis thaliana (Mouse-ear cress).